Here is a 379-residue protein sequence, read N- to C-terminus: Omega-3 fatty acid desaturase, endoplasmic reticulum (379 aa).

A helical transmembrane segment spans residues 52–72 (LSYVVRDVIFVATLIGIAIHL). The short motif at 97–101 (HDCGH) is the Histidine box-1 element. The Histidine box-2 signature appears at 133 to 137 (HKTHH). The next 2 helical transmembrane spans lie at 213 to 233 (TLCW…FGSL) and 236 to 256 (FKIY…VTYL). The Histidine box-3 motif lies at 300–304 (HVIHH).

This sequence belongs to the fatty acid desaturase type 1 family.

It is found in the endoplasmic reticulum membrane. It functions in the pathway lipid metabolism; polyunsaturated fatty acid biosynthesis. Its function is as follows. ER (microsomal) omega-3 fatty acid desaturase introduces the third double bond in the biosynthesis of 18:3 fatty acids, important constituents of plant membranes. It is thought to use cytochrome b5 as an electron donor and to act on fatty acids esterified to phosphatidylcholine and, possibly, other phospholipids. The protein is Omega-3 fatty acid desaturase, endoplasmic reticulum (FAD3) of Nicotiana tabacum (Common tobacco).